The primary structure comprises 321 residues: Phosphatidate cytidylyltransferase, mitochondrial (321 aa).

The protein belongs to the TAM41 family. Mg(2+) is required as a cofactor. Requires Co(2+) as cofactor. It depends on Cu(2+) as a cofactor.

It localises to the mitochondrion inner membrane. It catalyses the reaction a 1,2-diacyl-sn-glycero-3-phosphate + CTP + H(+) = a CDP-1,2-diacyl-sn-glycerol + diphosphate. It functions in the pathway phospholipid metabolism; CDP-diacylglycerol biosynthesis; CDP-diacylglycerol from sn-glycerol 3-phosphate: step 3/3. In terms of biological role, catalyzes the formation of CDP-diacylglycerol (CDP-DAG) from phosphatidic acid (PA) in the mitochondrial inner membrane. Required for the biosynthesis of the dimeric phospholipid cardiolipin, which stabilizes supercomplexes of the mitochondrial respiratory chain in the mitochondrial inner membrane. This Caenorhabditis elegans protein is Phosphatidate cytidylyltransferase, mitochondrial.